We begin with the raw amino-acid sequence, 193 residues long: UPF0301 protein SCO2948 (193 aa).

Belongs to the UPF0301 (AlgH) family.

This Streptomyces coelicolor (strain ATCC BAA-471 / A3(2) / M145) protein is UPF0301 protein SCO2948.